Here is a 382-residue protein sequence, read N- to C-terminus: Pyrimidine monooxygenase RutA (382 aa).

FMN-binding positions include 68–69 (IK), asparagine 134, glutamate 143, 159–160 (RY), and serine 209.

The protein belongs to the NtaA/SnaA/DszA monooxygenase family. RutA subfamily.

The enzyme catalyses uracil + FMNH2 + NADH + O2 = (Z)-3-ureidoacrylate + FMN + NAD(+) + H2O + H(+). It catalyses the reaction thymine + FMNH2 + NADH + O2 = (Z)-2-methylureidoacrylate + FMN + NAD(+) + H2O + H(+). Functionally, catalyzes the pyrimidine ring opening between N-3 and C-4 by an unusual flavin hydroperoxide-catalyzed mechanism, adding oxygen atoms in the process to yield ureidoacrylate peracid, that immediately reacts with FMN forming ureidoacrylate and FMN-N(5)-oxide. The FMN-N(5)-oxide reacts spontaneously with NADH to produce FMN. Requires the flavin reductase RutF to regenerate FMN in vivo. This Escherichia coli (strain SE11) protein is Pyrimidine monooxygenase RutA.